Consider the following 254-residue polypeptide: Alcohol dehydrogenase (254 aa).

10–33 (FVAGLGGIGLDTSREIVKSGPKNL) is a binding site for NAD(+). Substrate is bound at residue S138. The active-site Proton acceptor is the Y151.

The protein belongs to the short-chain dehydrogenases/reductases (SDR) family. As to quaternary structure, homodimer.

The catalysed reaction is a primary alcohol + NAD(+) = an aldehyde + NADH + H(+). The enzyme catalyses a secondary alcohol + NAD(+) = a ketone + NADH + H(+). The sequence is that of Alcohol dehydrogenase (Adh) from Drosophila nigra (Fruit fly).